We begin with the raw amino-acid sequence, 141 residues long: Hemoglobin subunit alpha (141 aa).

Positions 1 to 141 constitute a Globin domain; it reads VLSPADKTNV…VSTVLTSKYR (141 aa). A Phosphoserine modification is found at S3. K7 carries the N6-succinyllysine modification. T8 is subject to Phosphothreonine. K11 is modified (N6-succinyllysine). An N6-acetyllysine; alternate modification is found at K16. Position 16 is an N6-succinyllysine; alternate (K16). Y24 is modified (phosphotyrosine). S35 carries the phosphoserine modification. N6-succinyllysine is present on K40. S49 carries the post-translational modification Phosphoserine. H58 provides a ligand contact to O2. Residue H87 participates in heme b binding. S102 carries the phosphoserine modification. Position 108 is a phosphothreonine (T108). 2 positions are modified to phosphoserine: S124 and S131. Phosphothreonine is present on residues T134 and T137. S138 carries the post-translational modification Phosphoserine.

The protein belongs to the globin family. Heterotetramer of two alpha chains and two beta chains. Red blood cells.

In terms of biological role, involved in oxygen transport from the lung to the various peripheral tissues. Functionally, hemopressin acts as an antagonist peptide of the cannabinoid receptor CNR1. Hemopressin-binding efficiently blocks cannabinoid receptor CNR1 and subsequent signaling. The polypeptide is Hemoglobin subunit alpha (HBA) (Loris tardigradus (Slender loris)).